Consider the following 30-residue polypeptide: Cysteine-rich venom protein annuliferin-a (30 aa).

Belongs to the CRISP family. Contains 8 disulfide bonds. As to expression, expressed by the venom gland.

The protein resides in the secreted. In terms of biological role, inhibits calcium-activated potassium channels (KCa), voltage-gated potassium channel (Kv), and the calcium release channel/ryanodine receptor (RyR). In Naja annulifera (Banded Egyptian cobra), this protein is Cysteine-rich venom protein annuliferin-a.